A 734-amino-acid chain; its full sequence is 1,4-alpha-glucan branching enzyme GlgB (734 aa).

The Nucleophile role is filled by D413. The Proton donor role is filled by E466.

Belongs to the glycosyl hydrolase 13 family. GlgB subfamily. In terms of assembly, monomer.

The enzyme catalyses Transfers a segment of a (1-&gt;4)-alpha-D-glucan chain to a primary hydroxy group in a similar glucan chain.. It functions in the pathway glycan biosynthesis; glycogen biosynthesis. Its function is as follows. Catalyzes the formation of the alpha-1,6-glucosidic linkages in glycogen by scission of a 1,4-alpha-linked oligosaccharide from growing alpha-1,4-glucan chains and the subsequent attachment of the oligosaccharide to the alpha-1,6 position. The chain is 1,4-alpha-glucan branching enzyme GlgB from Nitrosomonas europaea (strain ATCC 19718 / CIP 103999 / KCTC 2705 / NBRC 14298).